The sequence spans 246 residues: tRNA pseudouridine synthase A (246 aa).

Residue Asp-52 is the Nucleophile of the active site. Tyr-111 contacts substrate.

It belongs to the tRNA pseudouridine synthase TruA family. As to quaternary structure, homodimer.

The enzyme catalyses uridine(38/39/40) in tRNA = pseudouridine(38/39/40) in tRNA. Its function is as follows. Formation of pseudouridine at positions 38, 39 and 40 in the anticodon stem and loop of transfer RNAs. The protein is tRNA pseudouridine synthase A of Ehrlichia ruminantium (strain Gardel).